Here is a 256-residue protein sequence, read N- to C-terminus: uncharacterized protein (256 aa).

The N-terminal stretch at 1–24 (MIKRVNKLVIGISLLFLVISITAG) is a signal peptide. C25 carries the N-palmitoyl cysteine lipid modification. A lipid anchor (S-diacylglycerol cysteine) is attached at C25.

It belongs to the staphylococcal tandem lipoprotein family.

Its subcellular location is the cell membrane. This is an uncharacterized protein from Staphylococcus aureus (strain bovine RF122 / ET3-1).